A 481-amino-acid polypeptide reads, in one-letter code: Probable cytosol aminopeptidase (481 aa).

Mn(2+)-binding residues include Lys247 and Asp252. Residue Lys259 is part of the active site. Asp270, Asp329, and Glu331 together coordinate Mn(2+). Residue Arg333 is part of the active site.

The protein belongs to the peptidase M17 family. The cofactor is Mn(2+).

It localises to the cytoplasm. It carries out the reaction Release of an N-terminal amino acid, Xaa-|-Yaa-, in which Xaa is preferably Leu, but may be other amino acids including Pro although not Arg or Lys, and Yaa may be Pro. Amino acid amides and methyl esters are also readily hydrolyzed, but rates on arylamides are exceedingly low.. It catalyses the reaction Release of an N-terminal amino acid, preferentially leucine, but not glutamic or aspartic acids.. Its function is as follows. Presumably involved in the processing and regular turnover of intracellular proteins. Catalyzes the removal of unsubstituted N-terminal amino acids from various peptides. The protein is Probable cytosol aminopeptidase of Clostridium tetani (strain Massachusetts / E88).